A 562-amino-acid polypeptide reads, in one-letter code: Sulfite reductase [NADPH] hemoprotein beta-component (562 aa).

[4Fe-4S] cluster is bound by residues C425, C431, C470, and C474. Residue C474 coordinates siroheme.

It belongs to the nitrite and sulfite reductase 4Fe-4S domain family. As to quaternary structure, alpha(8)-beta(8). The alpha component is a flavoprotein, the beta component is a hemoprotein. Requires siroheme as cofactor. It depends on [4Fe-4S] cluster as a cofactor.

It carries out the reaction hydrogen sulfide + 3 NADP(+) + 3 H2O = sulfite + 3 NADPH + 4 H(+). It participates in sulfur metabolism; hydrogen sulfide biosynthesis; hydrogen sulfide from sulfite (NADPH route): step 1/1. Its function is as follows. Component of the sulfite reductase complex that catalyzes the 6-electron reduction of sulfite to sulfide. This is one of several activities required for the biosynthesis of L-cysteine from sulfate. The chain is Sulfite reductase [NADPH] hemoprotein beta-component from Tolumonas auensis (strain DSM 9187 / NBRC 110442 / TA 4).